The chain runs to 306 residues: tRNA dimethylallyltransferase (306 aa).

Residue 15–22 coordinates ATP; it reads GPTASGKS. 17 to 22 serves as a coordination point for substrate; it reads TASGKS. The interval 40 to 43 is interaction with substrate tRNA; that stretch reads DSMQ.

This sequence belongs to the IPP transferase family. As to quaternary structure, monomer. Mg(2+) is required as a cofactor.

The catalysed reaction is adenosine(37) in tRNA + dimethylallyl diphosphate = N(6)-dimethylallyladenosine(37) in tRNA + diphosphate. Functionally, catalyzes the transfer of a dimethylallyl group onto the adenine at position 37 in tRNAs that read codons beginning with uridine, leading to the formation of N6-(dimethylallyl)adenosine (i(6)A). This Methylobacterium sp. (strain 4-46) protein is tRNA dimethylallyltransferase.